Reading from the N-terminus, the 835-residue chain is Pre-mRNA-splicing factor SYF1 (835 aa).

10 HAT repeats span residues 7–38, 46–77, 313–348, 414–456, 458–494, 517–551, 589–623, 628–664, 707–741, and 743–777; these read YILD…HWEA, RSAR…WFRR, ADFD…FEQA, EDFD…VYWS, KSYE…NEFQ, SIID…LLES, NNLH…EVME, ATKE…FEIH, LGPD…LEMS, and SDYT…FELE.

It belongs to the crooked-neck family. In terms of assembly, associated with the spliceosome.

The protein localises to the nucleus. Its function is as follows. Involved in pre-mRNA splicing and cell cycle progression. The chain is Pre-mRNA-splicing factor SYF1 (SYF1) from Candida glabrata (strain ATCC 2001 / BCRC 20586 / JCM 3761 / NBRC 0622 / NRRL Y-65 / CBS 138) (Yeast).